The sequence spans 176 residues: Protein GrpE (176 aa).

This sequence belongs to the GrpE family. As to quaternary structure, homodimer.

The protein localises to the cytoplasm. In terms of biological role, participates actively in the response to hyperosmotic and heat shock by preventing the aggregation of stress-denatured proteins, in association with DnaK and GrpE. It is the nucleotide exchange factor for DnaK and may function as a thermosensor. Unfolded proteins bind initially to DnaJ; upon interaction with the DnaJ-bound protein, DnaK hydrolyzes its bound ATP, resulting in the formation of a stable complex. GrpE releases ADP from DnaK; ATP binding to DnaK triggers the release of the substrate protein, thus completing the reaction cycle. Several rounds of ATP-dependent interactions between DnaJ, DnaK and GrpE are required for fully efficient folding. The protein is Protein GrpE of Rickettsia bellii (strain OSU 85-389).